The chain runs to 101 residues: NAD(P)H-quinone oxidoreductase subunit 4L, chloroplastic (101 aa).

3 helical membrane passes run 2 to 22 (MLEHELVLSAYLFSIGIYGLI), 32 to 52 (MCLELILNAVNMNLVTFSDLF), and 61 to 81 (IFSIFVIAIAAAEAAIGPAIV).

This sequence belongs to the complex I subunit 4L family. In terms of assembly, NDH is composed of at least 16 different subunits, 5 of which are encoded in the nucleus.

Its subcellular location is the plastid. It localises to the chloroplast thylakoid membrane. It catalyses the reaction a plastoquinone + NADH + (n+1) H(+)(in) = a plastoquinol + NAD(+) + n H(+)(out). The catalysed reaction is a plastoquinone + NADPH + (n+1) H(+)(in) = a plastoquinol + NADP(+) + n H(+)(out). Its function is as follows. NDH shuttles electrons from NAD(P)H:plastoquinone, via FMN and iron-sulfur (Fe-S) centers, to quinones in the photosynthetic chain and possibly in a chloroplast respiratory chain. The immediate electron acceptor for the enzyme in this species is believed to be plastoquinone. Couples the redox reaction to proton translocation, and thus conserves the redox energy in a proton gradient. In Ceratophyllum demersum (Rigid hornwort), this protein is NAD(P)H-quinone oxidoreductase subunit 4L, chloroplastic.